The primary structure comprises 559 residues: POU domain protein 1 (559 aa).

The POU-specific domain occupies 259 to 333 (EDLPSSDDLE…LLQKWLHEAD (75 aa)). The homeobox DNA-binding region spans 351–410 (KRKKRTSIEANVKSILESSFMKLSKPSAQDISSLAEKLSLEKEVVRVWFCNRRQKEKRIT).

It belongs to the POU transcription factor family.

It localises to the nucleus. This is POU domain protein 1 (POU1) from Dugesia japonica (Planarian).